Reading from the N-terminus, the 88-residue chain is Cell division topological specificity factor (88 aa).

It belongs to the MinE family.

Prevents the cell division inhibition by proteins MinC and MinD at internal division sites while permitting inhibition at polar sites. This ensures cell division at the proper site by restricting the formation of a division septum at the midpoint of the long axis of the cell. This is Cell division topological specificity factor from Shewanella denitrificans (strain OS217 / ATCC BAA-1090 / DSM 15013).